We begin with the raw amino-acid sequence, 151 residues long: Extracellular globin-4 (151 aa).

The Globin domain maps to 6-151 (CCSYEDRREI…LVARIAKDLP (146 aa)). Residues Cys-7 and Cys-138 are joined by a disulfide bond. His-101 serves as a coordination point for heme b.

It belongs to the globin family. The extracellular hemoglobin of the earthworm consists of 12 subunits that have a hexagonal bilayer structure with a molecular weight near 3.8 million. Each one-twelfth subunit is composed primarily of disulfide linked trimers (chains A, B, and C) and monomers (chain D).

Its subcellular location is the secreted. This is Extracellular globin-4 from Lumbricus terrestris (Common earthworm).